The following is a 155-amino-acid chain: Ribosome maturation factor RimP (155 aa).

This sequence belongs to the RimP family.

Its subcellular location is the cytoplasm. Its function is as follows. Required for maturation of 30S ribosomal subunits. This Staphylococcus haemolyticus (strain JCSC1435) protein is Ribosome maturation factor RimP.